Reading from the N-terminus, the 109-residue chain is uncharacterized protein (109 aa).

The first 23 residues, 1-23 (MKNYNFILISLFIIFFIILNISS), serve as a signal peptide directing secretion. Asparagine 27 carries an N-linked (GlcNAc...) asparagine glycan. The tract at residues 45-109 (YQEYMENRTP…KKDQQNQQQN (65 aa)) is disordered. The span at 54-72 (PNEQQQQQQQQQNNNNPPQ) shows a compositional bias: low complexity. Residues 94 to 103 (KLKEKLKKDQ) show a composition bias toward basic and acidic residues.

The protein localises to the secreted. This is an uncharacterized protein from Dictyostelium discoideum (Social amoeba).